A 245-amino-acid polypeptide reads, in one-letter code: Malonyl-[acyl-carrier protein] O-methyltransferase (245 aa).

Belongs to the methyltransferase superfamily.

It catalyses the reaction malonyl-[ACP] + S-adenosyl-L-methionine = malonyl-[ACP] methyl ester + S-adenosyl-L-homocysteine. It participates in cofactor biosynthesis; biotin biosynthesis. Converts the free carboxyl group of a malonyl-thioester to its methyl ester by transfer of a methyl group from S-adenosyl-L-methionine (SAM). It allows to synthesize pimeloyl-ACP via the fatty acid synthetic pathway. The chain is Malonyl-[acyl-carrier protein] O-methyltransferase from Calditerrivibrio nitroreducens (strain DSM 19672 / NBRC 101217 / Yu37-1).